Reading from the N-terminus, the 206-residue chain is Ras-related protein RABG3f (206 aa).

15–23 (GDSGVGKTS) serves as a coordination point for GTP. Positions 37–45 (YKATIGADF) match the Effector region motif. GTP-binding positions include 63 to 67 (DTAGQ), 125 to 128 (NKVD), and 158 to 159 (SA). Residues Cys204 and Cys206 are each lipidated (S-geranylgeranyl cysteine). At Cys206 the chain carries Cysteine methyl ester.

The protein belongs to the small GTPase superfamily. Rab family. Interacts with VPS35A.

The protein resides in the endosome membrane. It localises to the vacuole membrane. It is found in the prevacuolar compartment membrane. With respect to regulation, regulated by guanine nucleotide exchange factors (GEFs) which promote the exchange of bound GDP for free GTP. Regulated by the MON1-CCZ1 complex which serves as a link between Rab5 and Rab7 protein families in PVCs and mediates PVC maturation. Essential for trafficking from prevacuolar compartments to vacuoles. Involved in the trafficking of newly synthesized protein to vacuoles. Essential for plant growth. Participates in the recruitment of the core retromer components to the endosomal membrane by interacting with VPS35A. This is Ras-related protein RABG3f (RABG3F) from Arabidopsis thaliana (Mouse-ear cress).